The chain runs to 372 residues: MTQSRRMLVLRAVVEDYIRSQEPVGSTSLTRDHDLGVSSATIRNDMAALEDEGYLIQPHTSAGRVPTEKGYRYFVDRLATVVPLSEAQRRGINSFLSGSVSLKDALQRSARLLSEITGQVAVVASPSLAKATLRHVEMVPVAMTTLLAVVITDTGRVAQHGLTIASMPAVDEINRLSNTVNEQCDGLSLSKSAETVRSIAASAGYESVRGVADALADAFESMALDERANELYMSGTSHLAHSRSLADLAPLFDALEEQVVLMKLMSNLSEETNASGVGVAIGSEMHTPGLLHASVVSSGYGRSGAAGEPAGNDPVGEPETESETESQTNDTEPIAFVGSIGPTHMDYAATMAAVRAVARYLTAFLSEGRTQD.

The disordered stretch occupies residues 300–334 (YGRSGAAGEPAGNDPVGEPETESETESQTNDTEPI).

Belongs to the HrcA family.

In terms of biological role, negative regulator of class I heat shock genes (grpE-dnaK-dnaJ and groELS operons). Prevents heat-shock induction of these operons. The chain is Heat-inducible transcription repressor HrcA from Bifidobacterium longum (strain DJO10A).